The following is a 285-amino-acid chain: Iodotyrosine deiodinase 1 (285 aa).

The helical transmembrane segment at 1–21 (MFLLTPVLVAVVCILVIWVFK) threads the bilayer. FMN contacts are provided by residues 96–100 (RRSIR) and 124–125 (SG). The 3,5-diiodo-L-tyrosine site is built by A126, E153, Y157, and K178. 3-iodo-L-tyrosine-binding residues include A126, E153, Y157, and K178. Residues 233-235 (TTT) and R275 contribute to the FMN site.

It belongs to the nitroreductase family. Homodimer. FMN serves as cofactor.

The protein localises to the cell membrane. Its subcellular location is the cytoplasmic vesicle membrane. The enzyme catalyses 2 iodide + L-tyrosine + 2 NADP(+) = 3,5-diiodo-L-tyrosine + 2 NADPH + H(+). It catalyses the reaction iodide + L-tyrosine + NADP(+) = 3-iodo-L-tyrosine + NADPH. It carries out the reaction 3-iodo-L-tyrosine + iodide + NADP(+) = 3,5-diiodo-L-tyrosine + NADPH + H(+). The catalysed reaction is L-tyrosine + chloride + NADP(+) = 3-chloro-L-tyrosine + NADPH. The enzyme catalyses bromide + L-tyrosine + NADP(+) = 3-bromo-L-tyrosine + NADPH. Functionally, catalyzes the dehalogenation of halotyrosines such as 3-bromo-L-tyrosine, 3-chloro-L-tyrosine, 3-iodo-L-tyrosine and 3,5-diiodo-L-tyrosine. During thyroid hormone biosynthesis, facilitates iodide salvage by catalysing the oxidative NADPH-dependent deiodination of the halogenated by-products of thyroid hormone production, monoiodotyrosine (L-MIT) and diiodotyrosine (L-DIT). The scavanged iodide can then reenter the hormone-producing pathways. Acts more efficiently on 3-iodo-L-tyrosine than 3,5-diiodo-L-tyrosine. In Rattus norvegicus (Rat), this protein is Iodotyrosine deiodinase 1 (Iyd).